The following is a 338-amino-acid chain: Fructose-1,6-bisphosphatase class 1 (338 aa).

4 residues coordinate Mg(2+): glutamate 90, aspartate 112, leucine 114, and aspartate 115. Substrate is bound by residues 115–118 (DGSS), asparagine 207, and lysine 273. Glutamate 279 is a Mg(2+) binding site.

The protein belongs to the FBPase class 1 family. As to quaternary structure, homotetramer. It depends on Mg(2+) as a cofactor.

The protein resides in the cytoplasm. The catalysed reaction is beta-D-fructose 1,6-bisphosphate + H2O = beta-D-fructose 6-phosphate + phosphate. It functions in the pathway carbohydrate biosynthesis; gluconeogenesis. The sequence is that of Fructose-1,6-bisphosphatase class 1 from Stenotrophomonas maltophilia (strain K279a).